The chain runs to 345 residues: Dihydroorotate dehydrogenase (quinone) (345 aa).

FMN-binding positions include Ala65 to Lys69 and Thr89. Lys69 is a binding site for substrate. Asn114–Phe118 is a binding site for substrate. FMN-binding residues include Asn142 and Asn175. Asn175 is a substrate binding site. The active-site Nucleophile is the Ser178. Asn180 lines the substrate pocket. Lys220 and Thr248 together coordinate FMN. Asn249–Thr250 contacts substrate. Residues Gly271, Gly300, and Tyr321–Thr322 contribute to the FMN site.

It belongs to the dihydroorotate dehydrogenase family. Type 2 subfamily. In terms of assembly, monomer. FMN serves as cofactor.

It localises to the cell membrane. The enzyme catalyses (S)-dihydroorotate + a quinone = orotate + a quinol. It functions in the pathway pyrimidine metabolism; UMP biosynthesis via de novo pathway; orotate from (S)-dihydroorotate (quinone route): step 1/1. Functionally, catalyzes the conversion of dihydroorotate to orotate with quinone as electron acceptor. The polypeptide is Dihydroorotate dehydrogenase (quinone) (Burkholderia cenocepacia (strain ATCC BAA-245 / DSM 16553 / LMG 16656 / NCTC 13227 / J2315 / CF5610) (Burkholderia cepacia (strain J2315))).